The primary structure comprises 191 residues: MFLIVGLGNPGSKYDNTRHNIGFEVIDNISNEYNIDINRQKFRGVYGEGFIANNKVILLKPTTYMNLSGDSVREVANFYKISNENIIVIYDDISLDIGRLRIREKGSAGGHNGIKSIIANLSTDVFPRIKVGVGQPNIDLVNYVLGKFSKEEKEVLKESIEVATNSVEEIIKQDVNSAMNKFNGFKANKSI.

Residue Tyr14 coordinates tRNA. The active-site Proton acceptor is the His19. TRNA is bound by residues Tyr64, Asn66, and Asn112.

Belongs to the PTH family. In terms of assembly, monomer.

The protein resides in the cytoplasm. It carries out the reaction an N-acyl-L-alpha-aminoacyl-tRNA + H2O = an N-acyl-L-amino acid + a tRNA + H(+). Hydrolyzes ribosome-free peptidyl-tRNAs (with 1 or more amino acids incorporated), which drop off the ribosome during protein synthesis, or as a result of ribosome stalling. Its function is as follows. Catalyzes the release of premature peptidyl moieties from peptidyl-tRNA molecules trapped in stalled 50S ribosomal subunits, and thus maintains levels of free tRNAs and 50S ribosomes. This Clostridium botulinum (strain Eklund 17B / Type B) protein is Peptidyl-tRNA hydrolase.